A 161-amino-acid chain; its full sequence is Ribonuclease P protein component 2 (161 aa).

It belongs to the eukaryotic/archaeal RNase P protein component 2 family. Consists of a catalytic RNA component and at least 4-5 protein subunits.

It is found in the cytoplasm. The catalysed reaction is Endonucleolytic cleavage of RNA, removing 5'-extranucleotides from tRNA precursor.. Its function is as follows. Part of ribonuclease P, a protein complex that generates mature tRNA molecules by cleaving their 5'-ends. The polypeptide is Ribonuclease P protein component 2 (Natronomonas pharaonis (strain ATCC 35678 / DSM 2160 / CIP 103997 / JCM 8858 / NBRC 14720 / NCIMB 2260 / Gabara) (Halobacterium pharaonis)).